The primary structure comprises 363 residues: uncharacterized protein (363 aa).

Helical transmembrane passes span Tyr-34 to Trp-54, Leu-60 to Val-80, Glu-91 to Gly-111, and Leu-112 to Leu-132. The span at Ser-232–Leu-245 shows a compositional bias: polar residues. Residues Ser-232–Lys-363 are disordered. Low complexity-rich tracts occupy residues Thr-246–Asn-268 and Asp-275–Ser-285. A compositionally biased stretch (basic and acidic residues) spans Ser-322–Ser-342.

This sequence belongs to the chlamydial CPn_0443/CT_005/TC_0273 family.

The protein localises to the cell membrane. This is an uncharacterized protein from Chlamydia trachomatis serovar D (strain ATCC VR-885 / DSM 19411 / UW-3/Cx).